Reading from the N-terminus, the 221-residue chain is Probable GTP-binding protein EngB (221 aa).

An EngB-type G domain is found at 23 to 211; sequence PLREVAFAGR…DNLIIKWLFE (189 aa). Residues S38 and T60 each coordinate Mg(2+).

This sequence belongs to the TRAFAC class TrmE-Era-EngA-EngB-Septin-like GTPase superfamily. EngB GTPase family. Mg(2+) serves as cofactor.

Its function is as follows. Necessary for normal cell division and for the maintenance of normal septation. The chain is Probable GTP-binding protein EngB from Polynucleobacter asymbioticus (strain DSM 18221 / CIP 109841 / QLW-P1DMWA-1) (Polynucleobacter necessarius subsp. asymbioticus).